Consider the following 215-residue polypeptide: Large ribosomal subunit protein uL16 (215 aa).

Belongs to the universal ribosomal protein uL16 family. As to quaternary structure, component of the small ribosomal subunit. Mature ribosomes consist of a small (40S) and a large (60S) subunit. The 40S subunit contains about 33 different proteins and 1 molecule of RNA (18S). The 60S subunit contains about 49 different proteins and 3 molecules of RNA (25S, 5.8S and 5S).

This Euglena gracilis protein is Large ribosomal subunit protein uL16 (RPL10).